The primary structure comprises 268 residues: Small ribosomal subunit protein uS10m (268 aa).

Residues 1–64 constitute a mitochondrion transit peptide; it reads MIIRPVVRSL…RITTTTEAPK (64 aa).

It belongs to the universal ribosomal protein uS10 family. In terms of assembly, component of the mitochondrial small ribosomal subunit (mt-SSU). Mature N.crassa 74S mitochondrial ribosomes consist of a small (37S) and a large (54S) subunit. The 37S small subunit contains a 16S ribosomal RNA (16S mt-rRNA) and 32 different proteins. The 54S large subunit contains a 23S rRNA (23S mt-rRNA) and 42 different proteins.

The protein localises to the mitochondrion. Functionally, component of the mitochondrial ribosome (mitoribosome), a dedicated translation machinery responsible for the synthesis of mitochondrial genome-encoded proteins, including at least some of the essential transmembrane subunits of the mitochondrial respiratory chain. The mitoribosomes are attached to the mitochondrial inner membrane and translation products are cotranslationally integrated into the membrane. In Neurospora crassa (strain ATCC 24698 / 74-OR23-1A / CBS 708.71 / DSM 1257 / FGSC 987), this protein is Small ribosomal subunit protein uS10m (mrp-10).